The sequence spans 354 residues: Glutamine synthetase (354 aa).

The GS beta-grasp domain maps to 22–101; sequence VQAEYVWIDG…VLAETFNNDG (80 aa). In terms of domain architecture, GS catalytic spans 108–354; it reads HRHHTKKVMD…IIVETTVLDK (247 aa).

This sequence belongs to the glutamine synthetase family. As to quaternary structure, homooctamer.

The protein localises to the cytoplasm. The enzyme catalyses L-glutamate + NH4(+) + ATP = L-glutamine + ADP + phosphate + H(+). This chain is Glutamine synthetase (GLNA), found in Suillus bovinus (Jersey cow bolete).